A 226-amino-acid chain; its full sequence is ATP-dependent dethiobiotin synthetase BioD (226 aa).

13–18 (DVGKTL) is a binding site for ATP. Residue Thr-17 participates in Mg(2+) binding. Lys-38 is an active-site residue. ATP-binding positions include Asp-55, 117–120 (EGAG), 177–178 (NR), 206–208 (PFV), and Glu-213. Residues Asp-55 and Glu-117 each coordinate Mg(2+).

It belongs to the dethiobiotin synthetase family. In terms of assembly, homodimer. Mg(2+) is required as a cofactor.

It is found in the cytoplasm. It carries out the reaction (7R,8S)-7,8-diammoniononanoate + CO2 + ATP = (4R,5S)-dethiobiotin + ADP + phosphate + 3 H(+). It functions in the pathway cofactor biosynthesis; biotin biosynthesis; biotin from 7,8-diaminononanoate: step 1/2. Its function is as follows. Catalyzes a mechanistically unusual reaction, the ATP-dependent insertion of CO2 between the N7 and N8 nitrogen atoms of 7,8-diaminopelargonic acid (DAPA, also called 7,8-diammoniononanoate) to form a ureido ring. In Aeromonas hydrophila subsp. hydrophila (strain ATCC 7966 / DSM 30187 / BCRC 13018 / CCUG 14551 / JCM 1027 / KCTC 2358 / NCIMB 9240 / NCTC 8049), this protein is ATP-dependent dethiobiotin synthetase BioD.